We begin with the raw amino-acid sequence, 169 residues long: ATP synthase subunit b (169 aa).

A helical transmembrane segment spans residues 3–23 (IKILLLVLPFFAFASEHGGVN).

The protein belongs to the ATPase B chain family. F-type ATPases have 2 components, F(1) - the catalytic core - and F(0) - the membrane proton channel. F(1) has five subunits: alpha(3), beta(3), gamma(1), delta(1), epsilon(1). F(0) has three main subunits: a(1), b(2) and c(10-14). The alpha and beta chains form an alternating ring which encloses part of the gamma chain. F(1) is attached to F(0) by a central stalk formed by the gamma and epsilon chains, while a peripheral stalk is formed by the delta and b chains.

It is found in the cell inner membrane. F(1)F(0) ATP synthase produces ATP from ADP in the presence of a proton or sodium gradient. F-type ATPases consist of two structural domains, F(1) containing the extramembraneous catalytic core and F(0) containing the membrane proton channel, linked together by a central stalk and a peripheral stalk. During catalysis, ATP synthesis in the catalytic domain of F(1) is coupled via a rotary mechanism of the central stalk subunits to proton translocation. Its function is as follows. Component of the F(0) channel, it forms part of the peripheral stalk, linking F(1) to F(0). The sequence is that of ATP synthase subunit b from Campylobacter curvus (strain 525.92).